Here is a 99-residue protein sequence, read N- to C-terminus: Small ribosomal subunit protein eS24 (99 aa).

It belongs to the eukaryotic ribosomal protein eS24 family.

In Pyrococcus abyssi (strain GE5 / Orsay), this protein is Small ribosomal subunit protein eS24.